The chain runs to 394 residues: Class II hydrophobin TH1 (394 aa).

An N-terminal signal peptide occupies residues 1 to 16 (MKFLAAASLLVASTLA). A disordered region spans residues 17–42 (VPTSSGGSCRPRPPPGGGNGGNGGNG). Gly residues predominate over residues 33–42 (GGNGGNGGNG). A hydrophobin 1 region spans residues 48–117 (GYQPCPAGLY…GQAVLCQDSI (70 aa)). Disulfide bonds link Cys52/Cys101, Cys62/Cys92, Cys63/Cys75, and Cys102/Cys113. The interval 135–157 (GNGGNNGGNTDYPGGNGGNNGGN) is disordered. Over residues 148 to 157 (GGNGGNNGGN) the composition is skewed to gly residues. Hydrophobin regions lie at residues 200–270 (GYQA…QPAI) and 326–394 (GSFK…CTGA).

It belongs to the cerato-ulmin hydrophobin family. As to quaternary structure, homotetramer. Further self-assembles to form highly ordered films at water-air interfaces through intermolecular interactions. Post-translationally, several N-termini starting at positions 17, 20, 22, 28 and 48 have been identified by direct sequencing. Contains a number of intrachain disulfide bonds. In terms of processing, not glycosylated.

The protein resides in the secreted. The protein localises to the cell wall. Functionally, aerial growth, conidiation, and dispersal of filamentous fungi in the environment rely upon a capability of their secreting small amphipathic proteins called hydrophobins (HPBs) with low sequence identity. Class I can self-assemble into an outermost layer of rodlet bundles on aerial cell surfaces, conferring cellular hydrophobicity that supports fungal growth, development and dispersal; whereas Class II form highly ordered films at water-air interfaces through intermolecular interactions but contribute nothing to the rodlet structure. TH1 is a class II hydrophobin that reduces water surface tension dramatically upon assembly at the water-air interface and plays a role in the formation of aerial hyphae. The sequence is that of Class II hydrophobin TH1 (TH1) from Claviceps fusiformis (Ergot fungus).